The primary structure comprises 411 residues: Multidrug resistance protein MdtA (411 aa).

An N-terminal signal peptide occupies residues 1–19; it reads MNAKRIRGLLILAAVIAIA. The span at 31–49 shows a compositional bias: polar residues; the sequence is PAAPGTSEQHAARTSHSEN. The tract at residues 31 to 58 is disordered; it reads PAAPGTSEQHAARTSHSENSGSGGGRRA.

It belongs to the membrane fusion protein (MFP) (TC 8.A.1) family. Part of a tripartite efflux system composed of MdtA, MdtB and MdtC.

Its subcellular location is the cell inner membrane. The sequence is that of Multidrug resistance protein MdtA from Pectobacterium atrosepticum (strain SCRI 1043 / ATCC BAA-672) (Erwinia carotovora subsp. atroseptica).